The chain runs to 2215 residues: MATRSSRRESRLPFLFALVALLPRGALGGGWTQRLHGGPAPLPQDRGFFVVQGDPRDLRLGTHGDAPGASPAARKPLRTRRSAALQPQPIQVYGQVSLNDSHNQMVVHWAGEKSNVIVALARDSLALARPKSSDVYVSYDYGKSFSKISEKLNFGVGNNSEAVISQFYHSPADNKRYIFVDAYAQYLWITFDFCSTIHGFSIPFRAADLLLHSKASNLLLGFDRSHPNKQLWKSDDFGQTWIMIQEHVKSFSWGIDPYDQPNAIYIERHEPFGFSTVLRSTDFFQSRENQEVILEEVRDFQLRDKYMFATKVVHLPGSQQQSSVQLWVSFGRKPMRAAQFVTKHPINEYYIADAAEDQVFVCVSHSNNSTNLYISEAEGLKFSLSLENVLYYSPGGAGSDTLVRYFANEPFADFHRVEGLQGVYIATLINGSMNEENMRSVITFDKGGTWEFLQAPAFTGYGEKINCELSQGCSLHLAQRLSQLLNLQLRRMPILSKESAPGLIIATGSVGKNLASKTNVYISSSAGARWREALPGPHYYTWGDHGGIIMAIAQGMETNELKYSTNEGETWKTFVFSEKPVFVYGLLTEPGEKSTVFTIFGSNKESVHSWLILQVNATDALGVPCTENDYKLWSPSDERGNECLLGHKTVFKRRTPHATCFNGEDFDRPVVVSNCSCTREDYECDFGFKMSEDLSLEVCVPDPEFSGKPYSPPVPCPVGSSYRRTRGYRKISGDTCSGGDVEARLEGELVPCPLAEENEFILYAMRKSIYRYDLASGATEQLPLSGLRAAVALDFDYERNCLYWSDLALDTIQRLCLNGSTGQEVIINSGLETVEALAFEPLSQLLYWVDAGFKKIEVANPDGDFRLTIVNSSVLDRPRALVLVPQEGVMFWTDWGDLKPGIYRSYMDGSAAYRLVSEDVKWPNGISVDSQWIYWTDAYLDCIERITFSGQQRSVILDSLPHPYAIAVFKNEIYWDDWSQLSIFRASKHSRSQVEILASQLTGLMDMKVFYKGKNAGSNACVPQPCSLLCLPKANNSKSCRCPEGVASSVLPSGDLMCDCPQGYQRKNNTCVKEENTCLRNQYRCSNGNCINSIWWCDFDNDCGDMSDERNCPTTVCDADTQFRCQESGTCIPLSYKCDLEDDCGDNSDESHCEMHQCRSDEFNCSSGMCIRSSWVCDGDNDCRDWSDEANCTAIYHTCEASNFQCHNGHCIPQRWACDGDADCQDGSDEDPVSCEKKCNGFHCPNGTCIPSSKHCDGLRDCPDGSDEQHCEPFCTRFMDFVCKNRQQCLFHSMVCDGIVQCRDGSDEDAAFAGCSQDPEFHKECDEFGFQCQNGVCISLIWKCDGMDDCGDYSDEANCENPTEAPNCSRYFQFHCENGHCIPNRWKCDRENDCGDWSDEKDCGDSHVLPSPTPGPSTCLPNYFHCSSGACVMGTWVCDGYRDCADGSDEEACPSLANSTAASTPTQFGQCDRFEFECHQPKKCIPNWKRCDGHQDCQDGQDEANCPTHSTLTCTSREFKCEDGEACIVLSERCDGFLDCSDESDEKACSDELTVYKVQNLQWTADFSGDVTLTWMRPKKMPSASCVYNVYYRVVGESIWKTLETHSNKTSTVLKVLKPDTTYQVKVQVHCLNKVHNTNDFVTLRTPEGLPDAPRNLQLSLNSEEEGVILGHWAPPVHTHGLIREYIVEYSRSGSKMWASQRAASNSTEIKNLLLNALYTVRVAAVTSRGIGNWSDSKSITTIKGKVIQAPNIHIDSYDENSLSFTLTMDGDIKVNGYVVNLFWSFDAHKQEKKTLSFRGGSALSHRVSNLTAHTSYEISAWAKTDLGDSPLAFEHILTRGSSPPAPSLKAKAINQTAVECIWTGPKNVVYGIFYATSFLDLYRNPKSVTTSLHNKTVIVSKDEQYLFLVRVLIPYQGPSSDYVVVKMIPDSRLPPRHLHAVHIGKTSALIKWESPYDSPDQDLFYAIAVKDLIRKTDRSYKVRSRNSTVEYSLSKLEPGGKYHIIVQLGNMSKDSSIKITTVSLSAPDALKIITENDHVLLFWKSLALKEKQFNETRGYEIHMSDSAVNLTAYLGNTTDNFFKVSNLKMGHNYTFTVQARCLFGSQICGEPAVLLYDELSSGADAAVIQAARSTDVAAVVVPILFLILLSLGVGFAILYTKHRRLQSSFSAFANSHYSSRLGSAIFSSGDDLGEDDEDAPMITGFSDDVPMVIA.

Residues 1-28 (MATRSSRRESRLPFLFALVALLPRGALG) form the signal peptide. The propeptide at 29-81 (GGWTQRLHGGPAPLPQDRGFFVVQGDPRDLRLGTHGDAPGASPAARKPLRTRR) is removed in mature form. The disordered stretch occupies residues 59–84 (RLGTHGDAPGASPAARKPLRTRRSAA). At 82–2138 (SAALQPQPIQ…IQAARSTDVA (2057 aa)) the chain is on the lumenal side. A glycan (N-linked (GlcNAc...) asparagine) is linked at asparagine 99. Serine 114 carries the phosphoserine modification. One copy of the BNR 1 repeat lies at 136 to 147 (YVSYDYGKSFSK). Asparagine 158 carries N-linked (GlcNAc...) asparagine glycosylation. The BNR 2 repeat unit spans residues 232-243 (WKSDDFGQTWIM). N-linked (GlcNAc...) asparagine glycosylation is found at asparagine 367, asparagine 368, and asparagine 430. 3 BNR repeats span residues 441–452 (VITFDKGGTWEF), 521–532 (YISSSAGARWRE), and 562–573 (KYSTNEGETWKT). N-linked (GlcNAc...) asparagine glycans are attached at residues asparagine 616, asparagine 674, asparagine 818, and asparagine 871. LDL-receptor class B repeat units follow at residues 800-843 (NCLY…EPLS), 844-887 (QLLY…VPQE), 888-932 (GVMF…DSQW), 933-972 (IYWT…FKNE), and 973-1013 (IYWD…FYKG). One can recognise an EGF-like domain in the interval 1026-1072 (CSLLCLPKANNSKSCRCPEGVASSVLPSGDLMCDCPQGYQRKNNTCV). N-linked (GlcNAc...) asparagine glycosylation is found at asparagine 1035 and asparagine 1068. LDL-receptor class A domains follow at residues 1076–1114 (NTCL…NCPT), 1115–1155 (TVCD…HCEM), 1156–1194 (HQCR…NCTA), 1198–1236 (TCEA…VSCE), 1238–1272 (KCNG…QHCE), 1273–1317 (PFCT…GCSQ), 1323–1361 (KECD…NCEN), 1366–1405 (PNCS…DCGD), and 1417–1455 (STCL…ACPS). 21 disulfides stabilise this stretch: cysteine 1078-cysteine 1090, cysteine 1085-cysteine 1103, cysteine 1097-cysteine 1112, cysteine 1117-cysteine 1131, cysteine 1125-cysteine 1144, cysteine 1138-cysteine 1153, cysteine 1158-cysteine 1170, cysteine 1165-cysteine 1183, cysteine 1177-cysteine 1192, cysteine 1199-cysteine 1211, cysteine 1206-cysteine 1224, cysteine 1218-cysteine 1235, cysteine 1239-cysteine 1249, cysteine 1244-cysteine 1262, cysteine 1256-cysteine 1271, cysteine 1275-cysteine 1289, cysteine 1283-cysteine 1302, cysteine 1296-cysteine 1315, cysteine 1325-cysteine 1337, cysteine 1332-cysteine 1350, and cysteine 1344-cysteine 1359. The N-linked (GlcNAc...) asparagine glycan is linked to asparagine 1164. N-linked (GlcNAc...) asparagine glycosylation is present at asparagine 1191. Asparagine 1246 is a glycosylation site (N-linked (GlcNAc...) asparagine). The N-linked (GlcNAc...) asparagine glycan is linked to asparagine 1367. 6 cysteine pairs are disulfide-bonded: cysteine 1368–cysteine 1381, cysteine 1376–cysteine 1394, cysteine 1388–cysteine 1403, cysteine 1419–cysteine 1431, cysteine 1426–cysteine 1444, and cysteine 1438–cysteine 1453. The N-linked (GlcNAc...) asparagine glycan is linked to asparagine 1458. LDL-receptor class A domains follow at residues 1469–1508 (GQCD…NCPT) and 1512–1551 (LTCT…ACSD). 6 disulfides stabilise this stretch: cysteine 1471–cysteine 1484, cysteine 1478–cysteine 1497, cysteine 1491–cysteine 1506, cysteine 1514–cysteine 1527, cysteine 1521–cysteine 1540, and cysteine 1534–cysteine 1549. Fibronectin type-III domains are found at residues 1557 to 1649 (KVQN…TPEG), 1653 to 1745 (APRN…TIKG), 1747 to 1846 (VIQA…SPPA), 1844 to 1928 (PPAP…VVKM), 1935 to 2030 (PPRH…APDA), and 2031 to 2119 (LKII…LYDE). Residues asparagine 1608, asparagine 1706, asparagine 1733, asparagine 1810, asparagine 1855, asparagine 1895, asparagine 1987, asparagine 2011, asparagine 2055, asparagine 2070, asparagine 2077, and asparagine 2093 are each glycosylated (N-linked (GlcNAc...) asparagine). A helical transmembrane segment spans residues 2139–2159 (AVVVPILFLILLSLGVGFAIL). The Cytoplasmic portion of the chain corresponds to 2160–2215 (YTKHRRLQSSFSAFANSHYSSRLGSAIFSSGDDLGEDDEDAPMITGFSDDVPMVIA). A Potential nuclear localization signal for the C-terminal fragment generated by PSEN1 motif is present at residues 2162 to 2165 (KHRR). Residues 2173 to 2178 (FANSHY) carry the Endocytosis signal motif. The tract at residues 2191-2215 (DDLGEDDEDAPMITGFSDDVPMVIA) is required for efficient Golgi apparatus - endosome sorting. The required for interaction with GGA1 and GGA2 stretch occupies residues 2202–2215 (MITGFSDDVPMVIA). Serine 2207 is subject to Phosphoserine; by ROCK2. The short motif at 2209–2213 (DVPMV) is the DXXLL motif involved in the interaction with GGA1 element.

Belongs to the VPS10-related sortilin family. SORL1 subfamily. As to quaternary structure, after maturation cleavage, interacts (via N-terminus) with its own propeptide; this interaction prevents interaction with other ligands, including CRLF1, GDNF, GFRA1, IL6 and IL6R. Interacts (via N-terminal ectodomain) with APP, forming a 1:1 stoichiometric complex, including with isoforms APP695, APP751 and APP770; this interaction retains APP in the trans-Golgi network and reduces processing into soluble APP-alpha and amyloid-beta peptides. Also interacts with APP C-terminal fragment C99 and with Abeta40. Interacts with beta-secretase BACE1/BACE; this interaction may affect BACE1-binding to APP and hence reduce BACE1-dependent APP cleavage. Interacts with LRPAP1/RAP. Interacts (via C-terminal cytosolic domain) with GGA1 and GGA2 (via N-terminal VHS domain). Interacts with PACS1. May interact (via the N-terminal ectodomain) with the morphogenetic neuropeptide, also called head activator or HA; this interaction is impaired in the presence of propeptide. Interacts with neurotensin/NTS. Interacts (via the N-terminal ectodomain) with PDGFB homodimer. Interacts (via N-terminal ectodomain) with the uPA receptor PLAUR. Interacts with uPA/PLAU and PAI1/SERPINE1, either individually or in complex with each other, leading to endocytosis. Also interacts with PAI1/SERPINE1 in complex with tPA/PLAT. Interacts (via C-terminus) with AP-1 and AP-2 complexes. Interacts with BMPR1A and BMPR1B. Interacts with lipoprotein lipase LPL; this interaction is optimal in slightly acidic conditions. Interacts (via N-terminal ectodomain) with GDNF (via propeptide) and GDNF receptor alpha-1/GFRA1, either individually or in complex with each other. The interaction with GDNF occurs mostly intracellularly. Also interacts with other GDNF receptor alpha family members, including GFRA2, GFRA3 and GFRA4. Interacts with the insulin receptor INSR; this interaction strongly increases the surface exposure of INSR. Interacts (via cytosolic C-terminus) with STK39/SPAK. Interacts (via N-terminal ectodomain) with the heterodimeric complex CRLF1-CLC; within this complex, the interaction is mediated predominantly by the CRLF1 moiety. Interacts with CNTFR, as well as with the tripartite signaling complex formed by CRLF1, CLC and CNTFR. Interacts (via N-terminal ectodomain) with IL6; this interaction leads to IL6 internalization and lysosomal degradation. Binding of SOLRL1 secreted N-terminal ectodomain to IL6 may increase IL6 trans signaling. Interacts with secreted IL6R; this interaction leads to IL6R internalization. Also interacts with transmembrane IL6R; this interaction does not affect subcellular location. Interacts with APOE. Interacts with apolipoprotein E-rich beta-VLDL. Interacts with APOA5; this interaction leads to APOA5 internalization and is abolished by heparin. Interaction with APOA5 results in enhanced binding to chylomicrons. Interacts with ROCK2. Interacts (via cytosolic C-terminus) with PPP3CB/calcineurin A beta. Interacts with NTRK2/TRKB; this interaction facilitates NTRK2 trafficking between synaptic plasma membranes, postsynaptic densities and cell soma, hence positively regulates BDNF signaling. Interacts (via cytosolic C-terminus) with HSPA12A in an ADP-dependent manner; this interaction affects SORL1 internalization and subcellular localization. Interacts (via N-terminal ectodomain) with ERBB2/HER2. Within the Golgi apparatus, the propeptide may be cleaved off by FURIN or a furin-like protease. After cleavage, the propeptide interacts with the mature protein N-terminus, preventing the association with other ligands. At the cell surface, partially subjected to proteolytic shedding that releases the ectodomain in the extracellular milieu. The shedding may be catalyzed by ADAM17/TACE. Following shedding, PSEN1/presenilin-1 cleaves the remaining transmembrane fragment and catalyzes the release of a C-terminal fragment in the cytosol and of a soluble N-terminal beta fragment in the extracellular milieu. The C-terminal cytosolic fragment localizes to the nucleus. In terms of processing, phosphorylation at Ser-2207 facilitates the interaction with GGA1. As to expression, highly expressed in the central nervous system, including in the brain and spinal cord, in neurons, as well as in glial cells (at protein level). In the brain, mainly expressed in the cerebellum, hippocampus, dentate gyrus, hypothalamus, and in the cerebral cortex (at protein level). Also detected in kidney, heart, lung and spleen. In the kidney, expressed in epithelial cells in the thick ascending limb of Henle's loop, the distal convoluted tubule, the connecting tubule and the cortical collecting duct (at protein level). Expressed in skeletal muscle (at protein level). Expressed in adipose tissue, including in brown adipose tissue and subcutaneous white adipose tissue. Expressed in intimal smooth muscle cells (at protein level).

The protein resides in the golgi apparatus membrane. The protein localises to the golgi apparatus. It localises to the trans-Golgi network membrane. It is found in the endosome membrane. Its subcellular location is the early endosome membrane. The protein resides in the recycling endosome membrane. The protein localises to the endoplasmic reticulum membrane. It localises to the endosome. It is found in the multivesicular body membrane. Its subcellular location is the cell membrane. The protein resides in the cytoplasmic vesicle. The protein localises to the secretory vesicle membrane. It localises to the secreted. In terms of biological role, sorting receptor that directs several proteins to their correct location within the cell. Along with AP-1 complex, involved Golgi apparatus - endosome sorting. Sorting receptor for APP, regulating its intracellular trafficking and processing into amyloidogenic-beta peptides. Retains APP in the trans-Golgi network, hence preventing its transit through late endosomes where amyloid beta peptides Abeta40 and Abeta42 are generated. May also sort newly produced amyloid-beta peptides to lysosomes for catabolism. Does not affect APP trafficking from the endoplasmic reticulum to Golgi compartments. Sorting receptor for the BDNF receptor NTRK2/TRKB that facilitates NTRK2 trafficking between synaptic plasma membranes, postsynaptic densities and cell soma, hence positively regulates BDNF signaling by controlling the intracellular location of its receptor. Sorting receptor for GDNF that promotes GDNF regulated, but not constitutive secretion. Sorting receptor for the GDNF-GFRA1 complex, directing it from the cell surface to endosomes. GDNF is then targeted to lysosomes and degraded, while its receptor GFRA1 recycles back to the cell membrane, resulting in a GDNF clearance pathway. The SORL1-GFRA1 complex further targets RET for endocytosis, but not for degradation, affecting GDNF-induced neurotrophic activities. Sorting receptor for ERBB2/HER2. Regulates ERBB2 subcellular distribution by promoting its recycling after internalization from endosomes back to the plasma membrane, hence stimulating phosphoinositide 3-kinase (PI3K)-dependent ERBB2 signaling. Sorting receptor for lipoprotein lipase LPL. Promotes LPL localization to endosomes and later to the lysosomes, leading to degradation of newly synthesized LPL. Potential sorting receptor for APOA5, inducing APOA5 internalization to early endosomes, then to late endosomes, wherefrom a portion is sent to lysosomes and degradation, another portion is sorted to the trans-Golgi network. Sorting receptor for the insulin receptor INSR. Promotes recycling of internalized INSR via the Golgi apparatus back to the cell surface, thereby preventing lysosomal INSR catabolism, increasing INSR cell surface expression and strengthening insulin signal reception in adipose tissue. Does not affect INSR internalization. Plays a role in renal ion homeostasis, controlling the phospho-regulation of SLC12A1/NKCC2 by STK39/SPAK kinase and PPP3CB/calcineurin A beta phosphatase, possibly through intracellular sorting of STK39 and PPP3CB. Stimulates, via the N-terminal ectodomain, the proliferation and migration of smooth muscle cells, possibly by increasing cell surface expression of the urokinase receptor uPAR/PLAUR. This may promote extracellular matrix proteolysis and hence facilitate cell migration. By acting on the migration of intimal smooth muscle cells, may accelerate intimal thickening following vascular injury. Promotes adhesion of monocytes. Stimulates proliferation and migration of monocytes/macrophages. Through its action on intimal smooth muscle cells and macrophages, may accelerate intimal thickening and macrophage foam cell formation in the process of atherosclerosis. Regulates hypoxia-enhanced adhesion of hematopoietic stem and progenitor cells to the bone marrow stromal cells via a PLAUR-mediated pathway. This function is mediated by the N-terminal ectodomain. Metabolic regulator, which functions to maintain the adequate balance between lipid storage and oxidation in response to changing environmental conditions, such as temperature and diet. The N-terminal ectodomain negatively regulates adipose tissue energy expenditure, acting through the inhibition the BMP/Smad pathway. May regulate signaling by the heterodimeric neurotrophic cytokine CLCF1-CRLF1 bound to the CNTFR receptor by promoting the endocytosis of the tripartite complex CLCF1-CRLF1-CNTFR and lysosomal degradation. May regulate IL6 signaling, decreasing cis signaling, possibly by interfering with IL6-binding to membrane-bound IL6R, while up-regulating trans signaling via soluble IL6R. The protein is Sortilin-related receptor (Sorl1) of Mus musculus (Mouse).